The chain runs to 1110 residues: Retinal guanylyl cyclase 1 (1110 aa).

The N-terminal stretch at 1–56 is a signal peptide; sequence MTACTFLAGGLRDPGLCGPTRWAPSPPGLPPIPPRPRLRLRPPLLLLLLLPRSVLS. Topologically, residues 57–467 are extracellular; that stretch reads AVFTVGVLGP…PDTICNGGVE (411 aa). N-linked (GlcNAc...) asparagine glycosylation occurs at Asn302. The helical transmembrane segment at 468-492 threads the bilayer; that stretch reads PSVVFIGFLLVVGMGLAGAFLAHYC. Residues 493–813 enclose the Protein kinase domain; sequence RHRLLHIQMV…DRTFELFKSI (321 aa). The Cytoplasmic portion of the chain corresponds to 493–1110; that stretch reads RHRLLHIQMV…KARPGQFSGK (618 aa). A Guanylate cyclase domain is found at 885–1015; sequence TLYFSDIVGF…DTVNTASAME (131 aa). The interval 1070–1110 is disordered; the sequence is PIPKPPDLQPGASNHGISLHEIPPDRRQKLEKARPGQFSGK. The span at 1091–1103 shows a compositional bias: basic and acidic residues; that stretch reads IPPDRRQKLEKAR.

Belongs to the adenylyl cyclase class-4/guanylyl cyclase family. In terms of assembly, homodimer; requires homodimerization for guanylyl cyclase activity. Interacts (via C-terminus) with RD3 (via C-terminus); promotes the exit of GUCY2D from the endoplasmic reticulum and its trafficking to the photoreceptor outer segments. Interaction with RD3 negatively regulates GUCY2D guanylate cyclase activity. Expressed in the retina in rod outer segment.

It localises to the photoreceptor outer segment membrane. The protein resides in the endoplasmic reticulum membrane. It carries out the reaction GTP = 3',5'-cyclic GMP + diphosphate. With respect to regulation, activated by GUCA1A when free calcium ions concentration is low, and inhibited by GUCA1A when free calcium ions concentration is high. Negatively regulated by RD3; inhibits the basal and GUCA1A-stimulated guanylate cyclase activity. Its function is as follows. Catalyzes the synthesis of cyclic GMP (cGMP) in rods and cones of photoreceptors. Plays an essential role in phototransduction, by mediating cGMP replenishment. May also participate in the trafficking of membrane-asociated proteins to the photoreceptor outer segment membrane. The sequence is that of Retinal guanylyl cyclase 1 (GUCY2D) from Bos taurus (Bovine).